The sequence spans 96 residues: ATP-dependent Clp protease adapter protein ClpS (96 aa).

Belongs to the ClpS family. Binds to the N-terminal domain of the chaperone ClpA.

Involved in the modulation of the specificity of the ClpAP-mediated ATP-dependent protein degradation. The protein is ATP-dependent Clp protease adapter protein ClpS of Campylobacter jejuni subsp. doylei (strain ATCC BAA-1458 / RM4099 / 269.97).